The sequence spans 328 residues: Gonadotropin-releasing hormone receptor (328 aa).

The Extracellular portion of the chain corresponds to 1–38; sequence MANSASPEQNQNHCSAINNSIPLMQGNLPTLTLSGKIR. A glycan (N-linked (GlcNAc...) asparagine) is linked at Asn-18. A helical membrane pass occupies residues 39–58; sequence VTVTFFLFLLSATFNASFLL. The Cytoplasmic portion of the chain corresponds to 59–77; sequence KLQKWTQKKEKGKKLSRMK. Residues 78–97 form a helical membrane-spanning segment; the sequence is LLLKHLTLANLLETLIVMPL. Over 98–115 the chain is Extracellular; it reads DGMWNITVQWYAGELLCK. The N-linked (GlcNAc...) asparagine glycan is linked to Asn-102. Cys-114 and Cys-196 are oxidised to a cystine. The helical transmembrane segment at 116 to 137 threads the bilayer; sequence VLSYLKLFSMYAPAFMMVVISL. Residues 138–164 are Cytoplasmic-facing; it reads DRSLAITRPLALKSNSKVGQSMVGLAW. A helical transmembrane segment spans residues 165 to 184; the sequence is ILSSVFAGPQLYIFRMIHLA. The Extracellular portion of the chain corresponds to 185–212; that stretch reads DSSGQTKVFSQCVTHCSFSQWWHQAFYN. The helical transmembrane segment at 213–232 threads the bilayer; sequence FFTFSCLFIIPLFIMLICNA. At 233–281 the chain is on the cytoplasmic side; that stretch reads KIIFTLTRVLHQDPHELQLNQSKNNIPRARLKTLKMTVAFATSFTVCWT. Residues 282–300 traverse the membrane as a helical segment; the sequence is PYYVLGIWYWFDPEMLNRL. Topologically, residues 301–306 are extracellular; sequence SDPVNH. Residues 307–326 form a helical membrane-spanning segment; it reads FFFLFAFLNPCFDPLIYGYF. Over 327 to 328 the chain is Cytoplasmic; that stretch reads SL.

This sequence belongs to the G-protein coupled receptor 1 family. As to expression, pituitary, ovary, testis, breast and prostate but not in liver and spleen.

Its subcellular location is the cell membrane. Its function is as follows. Receptor for gonadotropin releasing hormone (GnRH) that mediates the action of GnRH to stimulate the secretion of the gonadotropic hormones luteinizing hormone (LH) and follicle-stimulating hormone (FSH). This receptor mediates its action by association with G-proteins that activate a phosphatidylinositol-calcium second messenger system. Isoform 2 may act as an inhibitor of GnRH-R signaling. The protein is Gonadotropin-releasing hormone receptor (GNRHR) of Homo sapiens (Human).